The following is a 404-amino-acid chain: Probable homogentisate phytyltransferase 1, chloroplastic (404 aa).

The transit peptide at 1–77 directs the protein to the chloroplast; it reads MDSLRLRPSL…SHHRIPHRPT (77 aa). Residues 68 to 96 are disordered; the sequence is SHHRIPHRPTSSSADASGQPLQSSAEAHD. Over residues 76 to 92 the composition is skewed to polar residues; that stretch reads PTSSSADASGQPLQSSA. 9 consecutive transmembrane segments (helical) span residues 119–139, 144–164, 184–204, 216–238, 245–265, 282–302, 325–345, 348–368, and 382–402; these read TVIG…ENLS, LFLT…IYIV, LASG…FAAM, PLFL…LPFL, VVAA…AFFL, LIFA…FKDI, VFWI…LMGA, ACLW…AILW, and ITSF…LIPL.

The protein belongs to the UbiA prenyltransferase family.

Its subcellular location is the plastid. It is found in the chloroplast thylakoid membrane. It carries out the reaction phytyl diphosphate + homogentisate + H(+) = 2-methyl-6-phytyl-1,4-benzene-1,4-diol + CO2 + diphosphate. The protein operates within cofactor biosynthesis; tocopherol biosynthesis. In terms of biological role, involved in the synthesis of tocopherol (vitamin E). Catalyzes the condensation of homogentisate and phytyl diphosphate to form dimethylphytylhydroquinone. This Oryza sativa subsp. japonica (Rice) protein is Probable homogentisate phytyltransferase 1, chloroplastic (HPT1).